A 391-amino-acid chain; its full sequence is Transaldolase (391 aa).

Lys-134 (schiff-base intermediate with substrate) is an active-site residue. 2 consecutive EF-hand domains span residues 329-364 and 365-387; these read TLTH…FDAL and DANH…VLHL. Residues Asp-342, Asp-344, Asp-346, Glu-353, Asp-365, Asn-367, Asp-369, Lys-371, and Asp-376 each coordinate Ca(2+).

This sequence belongs to the transaldolase family. Type 1 subfamily.

The protein localises to the cytoplasm. It catalyses the reaction D-sedoheptulose 7-phosphate + D-glyceraldehyde 3-phosphate = D-erythrose 4-phosphate + beta-D-fructose 6-phosphate. It functions in the pathway carbohydrate degradation; pentose phosphate pathway; D-glyceraldehyde 3-phosphate and beta-D-fructose 6-phosphate from D-ribose 5-phosphate and D-xylulose 5-phosphate (non-oxidative stage): step 2/3. Functionally, transaldolase is important for the balance of metabolites in the pentose-phosphate pathway. This chain is Transaldolase, found in Thermosynechococcus vestitus (strain NIES-2133 / IAM M-273 / BP-1).